The primary structure comprises 620 residues: DNA mismatch repair protein MutL (620 aa).

The segment at 332–402 (SELGLEAQPE…YRTPLRPATH (71 aa)) is disordered. The segment covering 352–365 (SNSTNSNVSSTSYS) has biased composition (low complexity). A compositionally biased stretch (polar residues) spans 378–394 (PLTTTATSYNQGQSSYR).

It belongs to the DNA mismatch repair MutL/HexB family.

Functionally, this protein is involved in the repair of mismatches in DNA. It is required for dam-dependent methyl-directed DNA mismatch repair. May act as a 'molecular matchmaker', a protein that promotes the formation of a stable complex between two or more DNA-binding proteins in an ATP-dependent manner without itself being part of a final effector complex. The protein is DNA mismatch repair protein MutL of Shewanella piezotolerans (strain WP3 / JCM 13877).